Consider the following 89-residue polypeptide: Sec-independent protein translocase protein TatA (89 aa).

A helical transmembrane segment spans residues 1–21; that stretch reads MFGLSPAQLIILLVVILLIFG.

The protein belongs to the TatA/E family. The Tat system comprises two distinct complexes: a TatABC complex, containing multiple copies of TatA, TatB and TatC subunits, and a separate TatA complex, containing only TatA subunits. Substrates initially bind to the TatABC complex, which probably triggers association of the separate TatA complex to form the active translocon.

It localises to the cell inner membrane. In terms of biological role, part of the twin-arginine translocation (Tat) system that transports large folded proteins containing a characteristic twin-arginine motif in their signal peptide across membranes. TatA could form the protein-conducting channel of the Tat system. This chain is Sec-independent protein translocase protein TatA, found in Haemophilus influenzae (strain ATCC 51907 / DSM 11121 / KW20 / Rd).